The primary structure comprises 262 residues: Transmembrane protein 81 (262 aa).

Residues 1-30 form the signal peptide; sequence MKAVATVFICGSLVLITYLPLVVTSPQTLA. Residues 31 to 225 lie on the Extracellular side of the membrane; that stretch reads IPEKLRQAVG…HLPGWRKKVS (195 aa). The N-linked (GlcNAc...) asparagine glycan is linked to Asn-45. The Ig-like domain maps to 83–171; the sequence is TNWICGMLHF…VQQLKNLKLV (89 aa). Cysteines 104 and 160 form a disulfide. A glycan (N-linked (GlcNAc...) asparagine) is linked at Asn-211. A helical transmembrane segment spans residues 226 to 246; the sequence is LALGVGIAAGVVGGVLVNVAL. Over 247 to 262 the chain is Cytoplasmic; sequence CRVLGGTGGNGNLSSL.

Forms a complex with IZUMO1 and SPACA6 on spermatocyte cell membrane required for fertilization.

The protein resides in the cell membrane. Functionally, essential fertilization factor required for male fertility. Part of a conserved trimeric sperm complex with the essential fertilization factors IZUMO1 and SPACA6 which bridges sperm and oocyte membranes during fertilization by binding to IZUMO1R/JUNO on the oocyte. In Rattus norvegicus (Rat), this protein is Transmembrane protein 81 (Tmem81).